The primary structure comprises 178 residues: Crossover junction endodeoxyribonuclease RuvC (178 aa).

Active-site residues include Asp-11, Glu-71, and Asp-143. Mg(2+)-binding residues include Asp-11, Glu-71, and Asp-143.

Belongs to the RuvC family. As to quaternary structure, homodimer which binds Holliday junction (HJ) DNA. The HJ becomes 2-fold symmetrical on binding to RuvC with unstacked arms; it has a different conformation from HJ DNA in complex with RuvA. In the full resolvosome a probable DNA-RuvA(4)-RuvB(12)-RuvC(2) complex forms which resolves the HJ. Requires Mg(2+) as cofactor.

The protein localises to the cytoplasm. The catalysed reaction is Endonucleolytic cleavage at a junction such as a reciprocal single-stranded crossover between two homologous DNA duplexes (Holliday junction).. In terms of biological role, the RuvA-RuvB-RuvC complex processes Holliday junction (HJ) DNA during genetic recombination and DNA repair. Endonuclease that resolves HJ intermediates. Cleaves cruciform DNA by making single-stranded nicks across the HJ at symmetrical positions within the homologous arms, yielding a 5'-phosphate and a 3'-hydroxyl group; requires a central core of homology in the junction. The consensus cleavage sequence is 5'-(A/T)TT(C/G)-3'. Cleavage occurs on the 3'-side of the TT dinucleotide at the point of strand exchange. HJ branch migration catalyzed by RuvA-RuvB allows RuvC to scan DNA until it finds its consensus sequence, where it cleaves and resolves the cruciform DNA. This chain is Crossover junction endodeoxyribonuclease RuvC, found in Neisseria meningitidis serogroup B (strain ATCC BAA-335 / MC58).